A 68-amino-acid chain; its full sequence is Large ribosomal subunit protein bL35 (68 aa).

This sequence belongs to the bacterial ribosomal protein bL35 family.

This is Large ribosomal subunit protein bL35 from Rickettsia canadensis (strain McKiel).